Reading from the N-terminus, the 259-residue chain is Protein BEAN1 (259 aa).

Residues 36-56 (VLVASAVIGVVIILSCITIIV) traverse the membrane as a helical segment. Residues 71-89 (RHRHHRHHHHHHHHRRRRH) show a composition bias toward basic residues. 2 disordered regions span residues 71-91 (RHRH…RHRE) and 152-259 (VGPG…ERIV). Over residues 171–187 (LTDSCPTLDGTSDSGSG) the composition is skewed to polar residues. Positions 221-230 (GAGPPSGLLP) are enriched in low complexity.

As to quaternary structure, interacts with NEDD4.

The protein resides in the membrane. This is Protein BEAN1 (BEAN1) from Homo sapiens (Human).